A 451-amino-acid chain; its full sequence is PTS system cellobiose-specific EIIC component (451 aa).

In terms of domain architecture, PTS EIIC type-3 spans 8-423 (LEDRVMPVAG…FIAFAIYYPF (416 aa)). Transmembrane regions (helical) follow at residues 31-51 (GIIL…VGFL), 72-92 (LLYP…FGVA), 104-124 (LSAG…QVPF), 138-158 (GIPV…LAIV), 187-207 (FVAL…RLIL), 227-247 (LSVL…VQLL), 250-270 (TGLH…LSLM), 293-313 (FFDL…ALTM), 347-367 (IVMN…LVVV), and 407-427 (ILQI…FSIW).

The protein localises to the cell membrane. Its function is as follows. The phosphoenolpyruvate-dependent sugar phosphotransferase system (sugar PTS), a major carbohydrate active transport system, catalyzes the phosphorylation of incoming sugar substrates concomitantly with their translocation across the cell membrane. The enzyme II CelABD PTS system is involved in cellobiose transport. The polypeptide is PTS system cellobiose-specific EIIC component (Geobacillus stearothermophilus (Bacillus stearothermophilus)).